We begin with the raw amino-acid sequence, 942 residues long: Protein inturned (942 aa).

A disordered region spans residues 1 to 52 (MASVASCDSRPSSDELPGDPSSQEEDEDYDFEDRVSDSGSYSSASSDYDDLE). The segment covering 22–31 (SQEEDEDYDF) has biased composition (acidic residues). Over residues 37–46 (DSGSYSSASS) the composition is skewed to low complexity. A PDZ domain is found at 185–263 (LVGIIHQTKW…PMQVKLTFEN (79 aa)). A phosphoserine mark is found at serine 670 and serine 674. Residues 704-754 (TRKPSPSCSSGGSDNGCEGGEDDGFSPHTTPDAVRKQRESQGSDGLEESGT) form a disordered region.

The protein belongs to the inturned family. In terms of assembly, component of the CPLANE (ciliogenesis and planar polarity effectors) complex, composed of INTU, FUZ and WDPCP. Interacts with CPLANE1. Interacts with NPHP4 and DAAM1; INTU is mediating the interaction between NPHP4 and DAAM1.

It is found in the cytoplasm. The protein resides in the cell surface. Its subcellular location is the cytoskeleton. It localises to the cilium basal body. The protein localises to the microtubule organizing center. It is found in the centrosome. The protein resides in the centriole. Plays a key role in ciliogenesis and embryonic development. Regulator of cilia formation by controlling the organization of the apical actin cytoskeleton and the positioning of the basal bodies at the apical cell surface, which in turn is essential for the normal orientation of elongating ciliary microtubules. Plays a key role in definition of cell polarity via its role in ciliogenesis but not via conversion extension. Has an indirect effect on hedgehog signaling. Proposed to function as core component of the CPLANE (ciliogenesis and planar polarity effectors) complex involved in the recruitment of peripheral IFT-A proteins to basal bodies. Required for recruitment of CPLANE2 to the mother centriole. Binds phosphatidylinositol 3-phosphate with highest affinity, followed by phosphatidylinositol 4-phosphate and phosphatidylinositol 5-phosphate. The chain is Protein inturned (INTU) from Homo sapiens (Human).